Here is a 394-residue protein sequence, read N- to C-terminus: Elongation factor Tu (394 aa).

The tr-type G domain maps to 10-204 (KPHVNVGTIG…ALDSYIPEPE (195 aa)). The tract at residues 19 to 26 (GHVDHGKT) is G1. 19–26 (GHVDHGKT) contributes to the GTP binding site. Residue Thr-26 participates in Mg(2+) binding. The tract at residues 60–64 (GITIN) is G2. The segment at 81-84 (DCPG) is G3. Residues 81 to 85 (DCPGH) and 136 to 139 (NKCD) contribute to the GTP site. A G4 region spans residues 136 to 139 (NKCD). The interval 174–176 (SAL) is G5.

It belongs to the TRAFAC class translation factor GTPase superfamily. Classic translation factor GTPase family. EF-Tu/EF-1A subfamily. In terms of assembly, monomer.

The protein localises to the cytoplasm. The catalysed reaction is GTP + H2O = GDP + phosphate + H(+). GTP hydrolase that promotes the GTP-dependent binding of aminoacyl-tRNA to the A-site of ribosomes during protein biosynthesis. The sequence is that of Elongation factor Tu from Sodalis glossinidius (strain morsitans).